The following is a 132-amino-acid chain: Translation initiation factor 5A (132 aa).

At K36 the chain carries Hypusine.

It belongs to the eIF-5A family.

It localises to the cytoplasm. In terms of biological role, functions by promoting the formation of the first peptide bond. This chain is Translation initiation factor 5A (eIF5A), found in Caldivirga maquilingensis (strain ATCC 700844 / DSM 13496 / JCM 10307 / IC-167).